A 265-amino-acid chain; its full sequence is NAD kinase 1 (265 aa).

Asp45 acts as the Proton acceptor in catalysis. Residues 45 to 46, 122 to 123, Arg148, Asp150, and Ala185 each bind NAD(+); these read DG and NE.

It belongs to the NAD kinase family. A divalent metal cation is required as a cofactor.

The protein resides in the cytoplasm. It catalyses the reaction NAD(+) + ATP = ADP + NADP(+) + H(+). In terms of biological role, involved in the regulation of the intracellular balance of NAD and NADP, and is a key enzyme in the biosynthesis of NADP. Catalyzes specifically the phosphorylation on 2'-hydroxyl of the adenosine moiety of NAD to yield NADP. The chain is NAD kinase 1 from Bacillus cereus (strain ATCC 10987 / NRS 248).